The sequence spans 147 residues: Myoglobin (147 aa).

Ala2 is modified (N-acetylalanine). The Globin domain occupies 2–141 (ADFDAVLKCW…IIADLEANYK (140 aa)). His60 provides a ligand contact to nitrite. His60 lines the O2 pocket. Residue His89 participates in heme b binding.

The protein belongs to the globin family. Monomeric.

It localises to the cytoplasm. It is found in the sarcoplasm. The catalysed reaction is Fe(III)-heme b-[protein] + nitric oxide + H2O = Fe(II)-heme b-[protein] + nitrite + 2 H(+). It carries out the reaction H2O2 + AH2 = A + 2 H2O. Its function is as follows. Monomeric heme protein which primary function is to store oxygen and facilitate its diffusion within muscle tissues. Reversibly binds oxygen through a pentacoordinated heme iron and enables its timely and efficient release as needed during periods of heightened demand. Depending on the oxidative conditions of tissues and cells, and in addition to its ability to bind oxygen, it also has a nitrite reductase activity whereby it regulates the production of bioactive nitric oxide. Under stress conditions, like hypoxia and anoxia, it also protects cells against reactive oxygen species thanks to its pseudoperoxidase activity. This Thunnus albacares (Yellowfin tuna) protein is Myoglobin (mb).